The primary structure comprises 252 residues: Cell division protein ZapD (252 aa).

This sequence belongs to the ZapD family. As to quaternary structure, interacts with FtsZ.

It is found in the cytoplasm. Cell division factor that enhances FtsZ-ring assembly. Directly interacts with FtsZ and promotes bundling of FtsZ protofilaments, with a reduction in FtsZ GTPase activity. The chain is Cell division protein ZapD from Cupriavidus taiwanensis (strain DSM 17343 / BCRC 17206 / CCUG 44338 / CIP 107171 / LMG 19424 / R1) (Ralstonia taiwanensis (strain LMG 19424)).